Reading from the N-terminus, the 607-residue chain is Threonine--tRNA ligase (607 aa).

The segment at 200–502 (DHRKLGRELG…LIEEYAGDFP (303 aa)) is catalytic. The Zn(2+) site is built by Cys299, His350, and His479.

The protein belongs to the class-II aminoacyl-tRNA synthetase family. Homodimer. The cofactor is Zn(2+).

The protein localises to the cytoplasm. The catalysed reaction is tRNA(Thr) + L-threonine + ATP = L-threonyl-tRNA(Thr) + AMP + diphosphate + H(+). Its function is as follows. Catalyzes the attachment of threonine to tRNA(Thr) in a two-step reaction: L-threonine is first activated by ATP to form Thr-AMP and then transferred to the acceptor end of tRNA(Thr). Also edits incorrectly charged L-seryl-tRNA(Thr). This chain is Threonine--tRNA ligase, found in Synechococcus sp. (strain ATCC 27144 / PCC 6301 / SAUG 1402/1) (Anacystis nidulans).